A 181-amino-acid chain; its full sequence is Large ribosomal subunit protein bL17 (181 aa).

The tract at residues 129-181 (AEKSEKSAKTAKAAKAPAKKATAKKASTKAVAAKKKAVKKAQKKDRAASAARA) is disordered. A compositionally biased stretch (basic residues) spans 145–171 (PAKKATAKKASTKAVAAKKKAVKKAQK).

This sequence belongs to the bacterial ribosomal protein bL17 family. As to quaternary structure, part of the 50S ribosomal subunit. Contacts protein L32.

This is Large ribosomal subunit protein bL17 from Bdellovibrio bacteriovorus (strain ATCC 15356 / DSM 50701 / NCIMB 9529 / HD100).